Consider the following 265-residue polypeptide: Taurine import ATP-binding protein TauB (265 aa).

Residues 7–236 (QNLNMIFKTP…MGIDGDLREI (230 aa)) form the ABC transporter domain. 41 to 48 (GPSGCGKT) provides a ligand contact to ATP.

It belongs to the ABC transporter superfamily. Taurine importer (TC 3.A.1.17.1) family. In terms of assembly, the complex is composed of two ATP-binding proteins (TauB), two transmembrane proteins (TauC) and a solute-binding protein (TauA).

Its subcellular location is the cell inner membrane. The catalysed reaction is taurine(out) + ATP + H2O = taurine(in) + ADP + phosphate + H(+). Its function is as follows. Part of the ABC transporter complex TauABC involved in taurine import. Responsible for energy coupling to the transport system. This is Taurine import ATP-binding protein TauB from Pelagibacter ubique (strain HTCC1062).